A 65-amino-acid polypeptide reads, in one-letter code: Large ribosomal subunit protein bL35 (65 aa).

This sequence belongs to the bacterial ribosomal protein bL35 family.

The chain is Large ribosomal subunit protein bL35 from Parasynechococcus marenigrum (strain WH8102).